A 1042-amino-acid polypeptide reads, in one-letter code: Probable serine/threonine protein kinase IRE4 (1042 aa).

Basic and acidic residues-rich tracts occupy residues 1–10 (MAEENRKDRG), 102–115 (EEIK…GKDE), and 314–327 (QRNE…RRDK). 3 disordered regions span residues 1–75 (MAEE…GTKL), 90–115 (PPKY…GKDE), and 297–327 (WGST…RRDK). Residues 402-421 (CRICEEEVPLFHLEPHSYIC) form a C2H2-type; atypical zinc finger. One can recognise a Protein kinase domain in the interval 670–955 (FEIIKPISRG…AAEVKSHPFF (286 aa)). ATP contacts are provided by residues 676–684 (ISRGAFGKV) and Lys699. Asp793 (proton acceptor) is an active-site residue. The interval 830–850 (ESDVSPRTNSHHFQKNQEEER) is disordered. Ser854 carries the phosphoserine modification. Positions 956-1042 (QGVDWENLAL…KLFFLLLCVF (87 aa)) constitute an AGC-kinase C-terminal domain.

The protein belongs to the protein kinase superfamily. AGC Ser/Thr protein kinase family.

The catalysed reaction is L-seryl-[protein] + ATP = O-phospho-L-seryl-[protein] + ADP + H(+). The enzyme catalyses L-threonyl-[protein] + ATP = O-phospho-L-threonyl-[protein] + ADP + H(+). In Arabidopsis thaliana (Mouse-ear cress), this protein is Probable serine/threonine protein kinase IRE4.